A 122-amino-acid chain; its full sequence is Probable DNA-directed RNA polymerase II subunit RPB11 (122 aa).

It belongs to the archaeal Rpo11/eukaryotic RPB11/RPC19 RNA polymerase subunit family. As to quaternary structure, component of the RNA polymerase II (Pol II) complex consisting of 12 subunits.

Its subcellular location is the nucleus. In terms of biological role, DNA-dependent RNA polymerase catalyzes the transcription of DNA into RNA using the four ribonucleoside triphosphates as substrates. Component of RNA polymerase II which synthesizes mRNA precursors and many functional non-coding RNAs. Pol II is the central component of the basal RNA polymerase II transcription machinery. It is composed of mobile elements that move relative to each other. RPB11 is part of the core element with the central large cleft. This chain is Probable DNA-directed RNA polymerase II subunit RPB11 (rpb-11), found in Caenorhabditis briggsae.